The following is a 792-amino-acid chain: Kinesin-like protein KIFC2 (792 aa).

Disordered stretches follow at residues 22 to 45 (AAAVSDPGDPTQKSGGQPRGRRRP) and 142 to 184 (QGTQ…QEHQ). Residues 142–169 (QGTQPTCPVQPSTLDGSLSQEESSSQPT) show a composition bias toward polar residues. Residues 186 to 347 (LQLEEEQRVW…ARMASLRQGC (162 aa)) adopt a coiled-coil conformation. The region spanning 409–732 (NIRVLCRLRP…LKFAERVGQV (324 aa)) is the Kinesin motor domain. 486-493 (GQTGTGKT) contacts ATP. The disordered stretch occupies residues 734-792 (LGPARRRRAPRSGTPSSLSTDTPLTGTSCTPTPSPGSPPSTSPNSCSGLTLEPPGDPPP). The span at 744-764 (RSGTPSSLSTDTPLTGTSCTP) shows a compositional bias: low complexity. Residues 765-774 (TPSPGSPPST) are compositionally biased toward pro residues.

The protein belongs to the TRAFAC class myosin-kinesin ATPase superfamily. Kinesin family. In terms of tissue distribution, present in axons and dendrites of neurons in the central and peripheral nervous systems.

Its subcellular location is the cytoplasm. It localises to the cytoskeleton. May play a role in microtubule-dependent retrograde axonal transport. May function as the motor for the transport of multivesicular body (MVB)-like organelles in dendrites. In Mus musculus (Mouse), this protein is Kinesin-like protein KIFC2 (Kifc2).